The following is a 133-amino-acid chain: Small ribosomal subunit protein uS8 (133 aa).

It belongs to the universal ribosomal protein uS8 family. Part of the 30S ribosomal subunit. Contacts proteins S5 and S12.

In terms of biological role, one of the primary rRNA binding proteins, it binds directly to 16S rRNA central domain where it helps coordinate assembly of the platform of the 30S subunit. This Prochlorococcus marinus (strain SARG / CCMP1375 / SS120) protein is Small ribosomal subunit protein uS8.